A 503-amino-acid chain; its full sequence is Maturase K (503 aa).

Belongs to the intron maturase 2 family. MatK subfamily.

It is found in the plastid. Its subcellular location is the chloroplast. Usually encoded in the trnK tRNA gene intron. Probably assists in splicing its own and other chloroplast group II introns. The polypeptide is Maturase K (Stangeria eriopus (Natal grass cycad)).